A 486-amino-acid chain; its full sequence is Betaine aldehyde dehydrogenase (486 aa).

Positions 23 and 90 each coordinate K(+). An NAD(+)-binding site is contributed by 147 to 149 (GAW). Catalysis depends on Lys159, which acts as the Charge relay system. Residues 173 to 176 (KPSE) and 226 to 229 (ESGT) contribute to the NAD(+) site. Leu241 is a K(+) binding site. Glu247 acts as the Proton acceptor in catalysis. Residues Gly249, Cys281, and Glu382 each coordinate NAD(+). Cys281 acts as the Nucleophile in catalysis. Cysteine sulfenic acid (-SOH) is present on Cys281. The K(+) site is built by Lys452 and Gly455. The Charge relay system role is filled by Glu459.

Belongs to the aldehyde dehydrogenase family. In terms of assembly, dimer of dimers. The cofactor is K(+).

The catalysed reaction is betaine aldehyde + NAD(+) + H2O = glycine betaine + NADH + 2 H(+). It functions in the pathway amine and polyamine biosynthesis; betaine biosynthesis via choline pathway; betaine from betaine aldehyde: step 1/1. In terms of biological role, involved in the biosynthesis of the osmoprotectant glycine betaine. Catalyzes the irreversible oxidation of betaine aldehyde to the corresponding acid. The polypeptide is Betaine aldehyde dehydrogenase (Vibrio campbellii (strain ATCC BAA-1116)).